A 443-amino-acid polypeptide reads, in one-letter code: EP1-like glycoprotein 4 (443 aa).

The signal sequence occupies residues 1–22 (MEFSTTLALFFTLSIFLVGAQA). The Bulb-type lectin domain occupies 29–159 (QFRVVNEGGY…NGKFVWQSFD (131 aa)). 4 N-linked (GlcNAc...) asparagine glycosylation sites follow: asparagine 66, asparagine 102, asparagine 258, and asparagine 269. The WD repeat unit spans residues 254 to 296 (GSQFNVSTFLSRPKHNATLSFLRLESDGNIRVWSYSTLATSTA). One can recognise a PAN domain in the interval 356 to 433 (CDPKTFHYFK…TSLVAYVKAP (78 aa)). 2 disulfide bridges follow: cysteine 387/cysteine 409 and cysteine 391/cysteine 397. Asparagine 434 carries N-linked (GlcNAc...) asparagine glycosylation.

Its subcellular location is the secreted. The protein localises to the cell wall. The polypeptide is EP1-like glycoprotein 4 (Arabidopsis thaliana (Mouse-ear cress)).